The primary structure comprises 170 residues: 3-hydroxyacyl-[acyl-carrier-protein] dehydratase FabZ (170 aa).

Residue His66 is part of the active site.

It belongs to the thioester dehydratase family. FabZ subfamily.

Its subcellular location is the cytoplasm. The catalysed reaction is a (3R)-hydroxyacyl-[ACP] = a (2E)-enoyl-[ACP] + H2O. Functionally, involved in unsaturated fatty acids biosynthesis. Catalyzes the dehydration of short chain beta-hydroxyacyl-ACPs and long chain saturated and unsaturated beta-hydroxyacyl-ACPs. The chain is 3-hydroxyacyl-[acyl-carrier-protein] dehydratase FabZ from Granulibacter bethesdensis (strain ATCC BAA-1260 / CGDNIH1).